The sequence spans 62 residues: Photosystem II reaction center protein Z (62 aa).

2 helical membrane passes run 8–28 and 41–61; these read AVFA…VALA and FSGV…NSFI.

It belongs to the PsbZ family. As to quaternary structure, PSII is composed of 1 copy each of membrane proteins PsbA, PsbB, PsbC, PsbD, PsbE, PsbF, PsbH, PsbI, PsbJ, PsbK, PsbL, PsbM, PsbT, PsbY, PsbZ, Psb30/Ycf12, at least 3 peripheral proteins of the oxygen-evolving complex and a large number of cofactors. It forms dimeric complexes.

Its subcellular location is the plastid. The protein resides in the chloroplast thylakoid membrane. Functionally, may control the interaction of photosystem II (PSII) cores with the light-harvesting antenna, regulates electron flow through the 2 photosystem reaction centers. PSII is a light-driven water plastoquinone oxidoreductase, using light energy to abstract electrons from H(2)O, generating a proton gradient subsequently used for ATP formation. The chain is Photosystem II reaction center protein Z from Pinus thunbergii (Japanese black pine).